Reading from the N-terminus, the 136-residue chain is ATP synthase epsilon chain, chloroplastic (136 aa).

The protein belongs to the ATPase epsilon chain family. In terms of assembly, F-type ATPases have 2 components, CF(1) - the catalytic core - and CF(0) - the membrane proton channel. CF(1) has five subunits: alpha(3), beta(3), gamma(1), delta(1), epsilon(1). CF(0) has three main subunits: a, b and c.

The protein localises to the plastid. Its subcellular location is the chloroplast thylakoid membrane. Produces ATP from ADP in the presence of a proton gradient across the membrane. The polypeptide is ATP synthase epsilon chain, chloroplastic (Cucumis sativus (Cucumber)).